The chain runs to 125 residues: Fluoride-specific ion channel FluC (125 aa).

The next 4 membrane-spanning stretches (helical) occupy residues 5-25 (FVFI…LAGF), 33-53 (FFPF…GFLW), 69-89 (FVLV…LETG), and 101-121 (IVNL…GIVL). Gly76 and Thr79 together coordinate Na(+).

The protein belongs to the fluoride channel Fluc/FEX (TC 1.A.43) family.

Its subcellular location is the cell inner membrane. The enzyme catalyses fluoride(in) = fluoride(out). Its activity is regulated as follows. Na(+) is not transported, but it plays an essential structural role and its presence is essential for fluoride channel function. Functionally, fluoride-specific ion channel. Important for reducing fluoride concentration in the cell, thus reducing its toxicity. In Desulforapulum autotrophicum (strain ATCC 43914 / DSM 3382 / VKM B-1955 / HRM2) (Desulfobacterium autotrophicum), this protein is Fluoride-specific ion channel FluC.